Here is a 1067-residue protein sequence, read N- to C-terminus: FHIP family protein GL19323 (1067 aa).

Positions 1–11 are enriched in polar residues; sequence MSWLRSSPLRQ. Disordered stretches follow at residues 1-31, 503-525, and 832-1013; these read MSWL…GSLR, LARP…QPIQ, and NENS…SEPA. Residues Ser508 and Ser835 each carry the phosphoserine modification. Residues 842–858 are compositionally biased toward low complexity; sequence QPQTTLSQQQQQQQGQQ. The span at 859–878 shows a compositional bias: polar residues; that stretch reads RSAYATLSAATPVQATQTSA. A compositionally biased stretch (low complexity) spans 893-904; sequence SKSISSMFSRRS. The segment covering 918 to 949 has biased composition (polar residues); the sequence is LVGNNNSGSGQSQPFSSTGTGTCETSLSTNPQ. The span at 950-979 shows a compositional bias: low complexity; the sequence is SGAAAARSTGTATTANGNSSNSNISIGGST. The segment covering 980–996 has biased composition (polar residues); the sequence is QTLSGHSNTTTYSSSTL.

Belongs to the FHIP family.

The polypeptide is FHIP family protein GL19323 (Drosophila persimilis (Fruit fly)).